A 436-amino-acid chain; its full sequence is C4-dicarboxylate transport protein 2 (436 aa).

9 consecutive transmembrane segments (helical) span residues 14-34, 45-65, 77-97, 142-162, 198-218, 223-243, 290-310, 331-351, and 353-373; these read VLVA…TAVA, LIKM…IAGM, MALL…LVVV, VVGA…VLFG, PIGA…GSLV, LMLC…GGIA, VVGL…SIYL, ITLL…TGSG, and IVLA…LALI. The disordered stretch occupies residues 414 to 436; that stretch reads ELAGEGNASSPASDIPVGGREAV.

The protein belongs to the dicarboxylate/amino acid:cation symporter (DAACS) (TC 2.A.23) family.

Its subcellular location is the cell inner membrane. Responsible for the transport of dicarboxylates such as succinate, fumarate, and malate from the periplasm across the membrane. The protein is C4-dicarboxylate transport protein 2 of Pseudomonas aeruginosa (strain UCBPP-PA14).